Here is a 272-residue protein sequence, read N- to C-terminus: 5'-AMP-activated protein kinase subunit beta-2 (272 aa).

Residues 1–52 (MGNTTSDRVSGERHGAKAARSEGAGGHAPGKEHKIMVGSTDDPSVFSLPDSK) are disordered. Serine 39 is subject to Phosphoserine. The residue at position 40 (threonine 40) is a Phosphothreonine. Serine 69 is modified (phosphoserine; by ULK1). Phosphoserine is present on residues serine 95 and serine 108. At threonine 148 the chain carries Phosphothreonine. 4 positions are modified to phosphoserine: serine 158, serine 170, serine 174, and serine 184.

The protein belongs to the 5'-AMP-activated protein kinase beta subunit family. AMPK is a heterotrimer of an alpha catalytic subunit (PRKAA1 or PRKAA2), a beta (PRKAB1 or PRKAB2) and a gamma non-catalytic subunits (PRKAG1, PRKAG2 or PRKAG3). Post-translationally, phosphorylated when associated with the catalytic subunit (PRKAA1 or PRKAA2). Phosphorylated by ULK1 and ULK2; leading to negatively regulate AMPK activity and suggesting the existence of a regulatory feedback loop between ULK1, ULK2 and AMPK.

Non-catalytic subunit of AMP-activated protein kinase (AMPK), an energy sensor protein kinase that plays a key role in regulating cellular energy metabolism. In response to reduction of intracellular ATP levels, AMPK activates energy-producing pathways and inhibits energy-consuming processes: inhibits protein, carbohydrate and lipid biosynthesis, as well as cell growth and proliferation. AMPK acts via direct phosphorylation of metabolic enzymes, and by longer-term effects via phosphorylation of transcription regulators. Also acts as a regulator of cellular polarity by remodeling the actin cytoskeleton; probably by indirectly activating myosin. Beta non-catalytic subunit acts as a scaffold on which the AMPK complex assembles, via its C-terminus that bridges alpha (PRKAA1 or PRKAA2) and gamma subunits (PRKAG1, PRKAG2 or PRKAG3). The polypeptide is 5'-AMP-activated protein kinase subunit beta-2 (PRKAB2) (Homo sapiens (Human)).